The sequence spans 500 residues: Probable E3 ubiquitin-protein ligase ARI16 (500 aa).

A TRIAD supradomain region spans residues 74-288 (NSNSSSADRE…QGNWNCSPVA (215 aa)). An RING-type 1 zinc finger spans residues 78-130 (SSADRETGDGDYLVSTPFCSHKFSTTCWSEYLSDALKKNKEQRGLISCLSQDC). Zn(2+)-binding residues include cysteine 96, histidine 98, cysteine 125, cysteine 130, cysteine 169, cysteine 174, cysteine 194, cysteine 196, cysteine 201, cysteine 204, histidine 209, cysteine 214, cysteine 241, cysteine 244, cysteine 261, cysteine 263, cysteine 268, cysteine 271, histidine 278, and cysteine 284. Residues 148–214 (EMYENYILES…GLESHRPVSC (67 aa)) form an IBR-type zinc finger. An RING-type 2; atypical zinc finger spans residues 241–271 (CPKCKIPVQQNGDPNYRLINCICSNNFCWIC). Residues 453 to 483 (EPGSRWFCDRCTFENSWVDKQCKMCFFPLDY) form a RanBP2-type zinc finger.

It belongs to the RBR family. Ariadne subfamily. The cofactor is Zn(2+). In terms of tissue distribution, preferentially expressed in green siliques.

It carries out the reaction [E2 ubiquitin-conjugating enzyme]-S-ubiquitinyl-L-cysteine + [acceptor protein]-L-lysine = [E2 ubiquitin-conjugating enzyme]-L-cysteine + [acceptor protein]-N(6)-ubiquitinyl-L-lysine.. Its pathway is protein modification; protein ubiquitination. Functionally, might act as an E3 ubiquitin-protein ligase, or as part of E3 complex, which accepts ubiquitin from specific E2 ubiquitin-conjugating enzymes and then transfers it to substrates. The protein is Probable E3 ubiquitin-protein ligase ARI16 (ARI16) of Arabidopsis thaliana (Mouse-ear cress).